Consider the following 181-residue polypeptide: Oligoribonuclease (181 aa).

An Exonuclease domain is found at 8-171; sequence LIWIDLEMTG…QDIQESIAEL (164 aa). Tyr-129 is a catalytic residue.

It belongs to the oligoribonuclease family.

It is found in the cytoplasm. Its function is as follows. 3'-to-5' exoribonuclease specific for small oligoribonucleotides. This is Oligoribonuclease from Shewanella baltica (strain OS155 / ATCC BAA-1091).